Here is a 357-residue protein sequence, read N- to C-terminus: MKVDPNKEKALAAVLSQIEKQFGKGSIMKLGEDRSMDVETISTGSLSLDVALGAGGLPMGRIVEIYGPESSGKTTLTLEVIAAAQREGKTCAFIDAEHALDPIYAKKLGVDIDNLLCSQPDTGEQALEICDALTRSGAVDVIIVDSVAALTPKAEIEGEIGDSHMGLAARMMSQAMRKLAGNLKQSNTLLIFINQIRMKIGVMFGNPETTTGGNALKFYASVRLDIRRTGAIKEGDEVVGNETRVKVVKNKVAAPFKQAEFQILYGQGINRTGELVDLGVAHKLIEKAGAWYSYKGDKIGQGRANAGKYLTENPAIAAEIDKTLRELLLSNPSALASSASDDDNVEGNIDLETGEVF.

Position 67-74 (67-74 (GPESSGKT)) interacts with ATP.

Belongs to the RecA family.

It localises to the cytoplasm. Functionally, can catalyze the hydrolysis of ATP in the presence of single-stranded DNA, the ATP-dependent uptake of single-stranded DNA by duplex DNA, and the ATP-dependent hybridization of homologous single-stranded DNAs. It interacts with LexA causing its activation and leading to its autocatalytic cleavage. In Shewanella oneidensis (strain ATCC 700550 / JCM 31522 / CIP 106686 / LMG 19005 / NCIMB 14063 / MR-1), this protein is Protein RecA.